The sequence spans 162 residues: Caveolin-2 (162 aa).

Residues 1–86 (MGLETEKADV…FEISKYVMYK (86 aa)) lie on the Cytoplasmic side of the membrane. Y19 carries the phosphotyrosine; by SRC modification. 2 positions are modified to phosphoserine: S20 and S23. Y27 bears the Phosphotyrosine; by SRC mark. Phosphoserine is present on S36. The segment at residues 87–107 (FLTVFLAIPLAFIAGILFATL) is an intramembrane region (helical). The Cytoplasmic segment spans residues 108–162 (SCLHIWILMPFVKTCLMVLPSVQTIWKSVTDVIIAPLCTSVGRCFSSVSLQLSQD).

The protein belongs to the caveolin family. Monomer or homodimer. Interacts with CAV1; the interaction forms a stable heterooligomeric complex that is required for targeting to lipid rafts and for caveolae formation. Tyrosine phosphorylated forms do not form heterooligomers with the Tyr-19-phosphorylated form existing as a monomer or dimer, and the Tyr-27-form as a monomer only. Interacts (tyrosine phosphorylated form) with the SH2 domain-containing proteins, RASA1, NCK1 and SRC. Interacts (tyrosine phosphorylated form) with INSR, the interaction (Tyr-27-phosphorylated form) is increased on insulin stimulation. Interacts (Tyr-19 phosphorylated form) with MAPK1 (phosphorylated form); the interaction, promoted by insulin, leads to nuclear location and MAPK1 activation. Interacts with STAT3; the interaction is increased on insulin-induced tyrosine phosphorylation leading to STAT activation. In terms of processing, phosphorylated on serine and tyrosine residues. CAV1 promotes phosphorylation on Ser-23 which then targets the complex to the plasma membrane, lipid rafts and caveolae. Phosphorylation on Ser-36 appears to modulate mitosis in endothelial cells. Phosphorylation on both Tyr-19 and Tyr-27 is required for insulin-induced 'Ser-727' phosphorylation of STAT3 and its activation. Phosphorylation on Tyr-19 is required for insulin-induced phosphorylation of MAPK1 and DNA binding of STAT3. Tyrosine phosphorylation is induced by both EGF and insulin (By. similarity).

Its subcellular location is the nucleus. The protein localises to the cytoplasm. The protein resides in the golgi apparatus membrane. It is found in the cell membrane. It localises to the membrane. Its subcellular location is the caveola. Functionally, may act as a scaffolding protein within caveolar membranes. Interacts directly with G-protein alpha subunits and can functionally regulate their activity. Acts as an accessory protein in conjunction with CAV1 in targeting to lipid rafts and driving caveolae formation. The Ser-36 phosphorylated form has a role in modulating mitosis in endothelial cells. Positive regulator of cellular mitogenesis of the MAPK signaling pathway. Required for the insulin-stimulated nuclear translocation and activation of MAPK1 and STAT3, and the subsequent regulation of cell cycle progression. This is Caveolin-2 (CAV2) from Gorilla gorilla gorilla (Western lowland gorilla).